Consider the following 463-residue polypeptide: Exodeoxyribonuclease 7 large subunit (463 aa).

Belongs to the XseA family. Heterooligomer composed of large and small subunits.

It is found in the cytoplasm. It catalyses the reaction Exonucleolytic cleavage in either 5'- to 3'- or 3'- to 5'-direction to yield nucleoside 5'-phosphates.. Bidirectionally degrades single-stranded DNA into large acid-insoluble oligonucleotides, which are then degraded further into small acid-soluble oligonucleotides. This is Exodeoxyribonuclease 7 large subunit from Bordetella bronchiseptica (strain ATCC BAA-588 / NCTC 13252 / RB50) (Alcaligenes bronchisepticus).